The chain runs to 680 residues: SH3 domain-binding protein 1 (680 aa).

Residues Met1–Gln11 show a composition bias toward basic residues. Disordered stretches follow at residues Met1 to Thr24 and Ser160 to Thr184. The interval Met1–Gly275 is interaction with CGNL1. Positions Met81 to Ser262 constitute a BAR domain. A compositionally biased stretch (polar residues) spans Ser160 to Asn169. Residues Ser241 and Ser262 each carry the phosphoserine modification. The Rho-GAP domain occupies Val276–Phe469. The interaction with CD2AP stretch occupies residues Pro470–Glu680. The disordered stretch occupies residues Glu488–Glu680. A compositionally biased stretch (pro residues) spans Val502 to Ala516. Ser535 carries the post-translational modification Phosphoserine. Residues Pro536–Ala546 are compositionally biased toward polar residues. The segment covering Pro561–Pro571 has biased composition (pro residues). Ser582 carries the post-translational modification Phosphoserine. Thr592 bears the Phosphothreonine mark. The SH3-binding motif lies at Ala607–Pro616. The segment covering Thr609–Pro621 has biased composition (pro residues). Residue Ser632 is modified to Phosphoserine. The span at His660 to Arg671 shows a compositional bias: pro residues.

As to quaternary structure, interacts with RAC1. Interacts with the exocyst via EXOC4 and EXOC8; required for the localization of both SH3BP1 and the exocyst to the leading edge of migrating cells. Interacts with CD2AP and CGNL1; probably part of a complex at cell junctions. Interacts with CAPZA1; recruits CAPZA1 to forming cell junctions. May interact with AFDN. Interacts with PLXND1; they dissociate upon SEMA3E binding to PLXND1 allowing SH3BP1 to transduce downstream signal through RAC1 inactivation. Interacts with ABL1, GRB2 and SRC (via SH3 domain). As to expression, expressed in all tissues examined. Highest levels found in spleen and brain, lowest in heart and liver.

It is found in the cell projection. Its subcellular location is the cell junction. It localises to the tight junction. The protein localises to the adherens junction. The protein resides in the phagocytic cup. It is found in the nucleus. Its subcellular location is the cytoplasm. It localises to the cytosol. Functionally, GTPase activating protein (GAP) which specifically converts GTP-bound Rho-type GTPases including RAC1 and CDC42 in their inactive GDP-bound form. By specifically inactivating RAC1 at the leading edge of migrating cells, it regulates the spatiotemporal organization of cell protrusions which is important for proper cell migration. Also negatively regulates CDC42 in the process of actin remodeling and the formation of epithelial cell junctions. Through its GAP activity toward RAC1 and/or CDC42 plays a specific role in phagocytosis of large particles. Specifically recruited by a PI3 kinase/PI3K-dependent mechanism to sites of large particles engagement, inactivates RAC1 and/or CDC42 allowing the reorganization of the underlying actin cytoskeleton required for engulfment. It also plays a role in angiogenesis and the process of repulsive guidance as part of a semaphorin-plexin signaling pathway. Following the binding of PLXND1 to extracellular SEMA3E it dissociates from PLXND1 and inactivates RAC1, inducing the intracellular reorganization of the actin cytoskeleton and the collapse of cells. The sequence is that of SH3 domain-binding protein 1 from Mus musculus (Mouse).